Consider the following 1409-residue polypeptide: DNA-directed RNA polymerase subunit beta' (1409 aa).

Residues Cys-70, Cys-72, Cys-85, and Cys-88 each coordinate Zn(2+). Residues Asp-458, Asp-460, and Asp-462 each coordinate Mg(2+). 4 residues coordinate Zn(2+): Cys-813, Cys-887, Cys-894, and Cys-897. Over residues 1385–1403 (EAAELAGSTSDVSTTADAS) the composition is skewed to low complexity. Residues 1385–1409 (EAAELAGSTSDVSTTADASEGAASE) are disordered.

The protein belongs to the RNA polymerase beta' chain family. The RNAP catalytic core consists of 2 alpha, 1 beta, 1 beta' and 1 omega subunit. When a sigma factor is associated with the core the holoenzyme is formed, which can initiate transcription. It depends on Mg(2+) as a cofactor. Zn(2+) is required as a cofactor.

The catalysed reaction is RNA(n) + a ribonucleoside 5'-triphosphate = RNA(n+1) + diphosphate. In terms of biological role, DNA-dependent RNA polymerase catalyzes the transcription of DNA into RNA using the four ribonucleoside triphosphates as substrates. This is DNA-directed RNA polymerase subunit beta' from Variovorax paradoxus (strain S110).